The chain runs to 200 residues: Superoxide dismutase [Fe] (200 aa).

Positions 28, 80, 162, and 166 each coordinate Fe cation.

Belongs to the iron/manganese superoxide dismutase family. As to quaternary structure, homodimer. Fe cation serves as cofactor.

The enzyme catalyses 2 superoxide + 2 H(+) = H2O2 + O2. In terms of biological role, destroys superoxide anion radicals which are normally produced within the cells and which are toxic to biological systems. The sequence is that of Superoxide dismutase [Fe] (sodB) from Nostoc sp. (strain PCC 7120 / SAG 25.82 / UTEX 2576).